The following is a 195-amino-acid chain: tRNA (pseudouridine(54)-N(1))-methyltransferase (195 aa).

L129 provides a ligand contact to S-adenosyl-L-methionine.

It belongs to the methyltransferase superfamily. TrmY family. Homodimer.

The protein resides in the cytoplasm. It catalyses the reaction pseudouridine(54) in tRNA + S-adenosyl-L-methionine = N(1)-methylpseudouridine(54) in tRNA + S-adenosyl-L-homocysteine + H(+). In terms of biological role, specifically catalyzes the N1-methylation of pseudouridine at position 54 (Psi54) in tRNAs. The sequence is that of tRNA (pseudouridine(54)-N(1))-methyltransferase from Methanocorpusculum labreanum (strain ATCC 43576 / DSM 4855 / Z).